The sequence spans 435 residues: Mitogen-activated protein kinase HOG1 (435 aa).

An N-acetylthreonine modification is found at T2. The Protein kinase domain occupies 23 to 302; sequence YNDLNPVGMG…AADALAHPYS (280 aa). ATP is bound by residues 29 to 37 and K52; that span reads VGMGAFGLV. The active-site Proton acceptor is the D144. Residues C156 and C161 each contribute to the arsenite site. The residue at position 174 (T174) is a Phosphothreonine; by PBS2. Residues 174 to 176 carry the TXY motif; the sequence is TGY. Y176 is subject to Phosphotyrosine; by PBS2. C205 contributes to the arsenite binding site.

The protein belongs to the protein kinase superfamily. Ser/Thr protein kinase family. MAP kinase subfamily. HOG1 sub-subfamily. In terms of assembly, interacts with CDC37, HOT1, KIN28, PTP2, PTP3, RBP1, RCK2, RPD3, SIC1, SMP1 and SIN4. Mg(2+) serves as cofactor. In terms of processing, activated by PBS2-mediated concomitant phosphorylation at Thr-174 and Tyr-176. Post-translationally, dually phosphorylated on Thr-174 and Tyr-176, which activates the enzyme.

The protein resides in the cytoplasm. The protein localises to the nucleus. It carries out the reaction L-seryl-[protein] + ATP = O-phospho-L-seryl-[protein] + ADP + H(+). The catalysed reaction is L-threonyl-[protein] + ATP = O-phospho-L-threonyl-[protein] + ADP + H(+). Its activity is regulated as follows. Activated by tyrosine and threonine phosphorylation. Inactivated by dephosphorylation via recruitment of PTC1 to the PBS2-HOG1 complex after adaptation to osmotic stress. PTP2 and PTP3 inactivate HOG1 by dephosphorylating Tyr-176, while the PP2Cs PTC1 and PTC2 or PTC3 dephosphorylate Thr-174 in the activation loop. Functionally, proline-directed serine/threonine-protein kinase involved in a signal transduction pathway that is activated by changes in the osmolarity of the extracellular environment. Controls osmotic regulation of transcription via the stress response element (STRE) in promoters of target genes. Upon osmotic shock, associates with the SKO1-SSN6-TUP1 complex, phosphorylates SKO1, and converts it into an activator that subsequently recruits Swi/Snf and SAGA complexes. Activates the SMP1 transcription factor and the RCK2 kinase, both also involved in the regulation of the expression of a subset of osmotic stress-related genes. Phosphorylation of HSL1 by HOG1 leads to a G2 arrest essential for cell survival at high osmolarity. Also mediates cell-cycle arrest in G1 phase by the dual targeting of SIC1. Phosphorylates methyltransferase DOT1 at least on 'Ser-565' and 'Thr-576'. Regulates MFA2 ARE-mediated translation in response to carbon source. Targets RPD3 histone deacetylase to osmoresponsive promoters to induce gene expression on stress. Required for the Golgi apparatus localization of MNN1. Plays an essential role in maintaining water homeostasis, arsenite detoxification, copper-resistance, cold-resistance, hydrogen peroxide response, adaptation to citric acid stress, and repression of the mating pathway activity. Functions as an arsenic sensor and effector via direct binding to arsenic and subsequent phosphorylation of the ARR1 transcription factor. In Saccharomyces cerevisiae (strain ATCC 204508 / S288c) (Baker's yeast), this protein is Mitogen-activated protein kinase HOG1 (HOG1).